Reading from the N-terminus, the 409-residue chain is NADH-quinone oxidoreductase subunit D (409 aa).

This sequence belongs to the complex I 49 kDa subunit family. NDH-1 is composed of 14 different subunits. Subunits NuoB, C, D, E, F, and G constitute the peripheral sector of the complex.

Its subcellular location is the cell inner membrane. It catalyses the reaction a quinone + NADH + 5 H(+)(in) = a quinol + NAD(+) + 4 H(+)(out). Functionally, NDH-1 shuttles electrons from NADH, via FMN and iron-sulfur (Fe-S) centers, to quinones in the respiratory chain. The immediate electron acceptor for the enzyme in this species is believed to be ubiquinone. Couples the redox reaction to proton translocation (for every two electrons transferred, four hydrogen ions are translocated across the cytoplasmic membrane), and thus conserves the redox energy in a proton gradient. In Helicobacter hepaticus (strain ATCC 51449 / 3B1), this protein is NADH-quinone oxidoreductase subunit D.